We begin with the raw amino-acid sequence, 110 residues long: MPSPILPMLPISHLIGTEVRNLISVRTPNITMDQLKNGCCSILTQLETLLRSQSPSEMTIFQTLCDRCCGAEVANEATVECGKTMETTNLTSGGRYWPFHNGTNLSRISL.

It is found in the mitochondrion. This is an uncharacterized protein from Arabidopsis thaliana (Mouse-ear cress).